Here is a 571-residue protein sequence, read N- to C-terminus: MTDTNKLKDFRHRSSVYDSMVKSPNRAMLRATGMTDDSFEKPIVGVISTWAENTPCNIHLHDFGKLAKEGVKEAGAWPVQYGTITVADGIAMGTPGMRFSLTSRDIIADSIEAAMGGHNVDAFVAIGGCDKNMPGSMIAIANMDIPAVFAYGGTIAPGNLNGKDIDLVSVFEGIGKWNNGDLTAEEVRQIECNACPGPGGCGGMYTANTMATAIEVMGMSIPGSSSHPAESPEKKADIEEAGRAVVRMLELGIKPSDIMTREAFEDAITVTMALGGSTNATLHLLAIAHAANVDLTLEDFNDFQERVPHLADLKPSGKYVFQDLYNVGGVPAVMKYLLKNGFLHGDRITCTGKTVAENLKNFADLTPGQDVIMPLENPKRADGPLIILKGNLAPEGAVAKVSGVKVRNHTGPAKVFDSEEEAIEAVLTDEIVDGDVVVVRYVGPKGGPGMPEMLSLSSMIVGKGQGDKVALLTDGRFSGGTYGLVVGHIAPEAQDGGPIAYLRTGDLVTVDQDTKEITMHVSDQEIEERKKTTVIPPLYSRGVLGKYAHTVSSASKGAVTDFWRPERTGKK.

Cys-56 provides a ligand contact to [2Fe-2S] cluster. Position 88 (Asp-88) interacts with Mg(2+). Cys-129 contributes to the [2Fe-2S] cluster binding site. Positions 130 and 131 each coordinate Mg(2+). Lys-131 is subject to N6-carboxylysine. Residue Cys-201 coordinates [2Fe-2S] cluster. Glu-452 lines the Mg(2+) pocket. Catalysis depends on Ser-478, which acts as the Proton acceptor.

Belongs to the IlvD/Edd family. Homodimer. The cofactor is [2Fe-2S] cluster. Mg(2+) is required as a cofactor.

It carries out the reaction (2R)-2,3-dihydroxy-3-methylbutanoate = 3-methyl-2-oxobutanoate + H2O. The catalysed reaction is (2R,3R)-2,3-dihydroxy-3-methylpentanoate = (S)-3-methyl-2-oxopentanoate + H2O. The protein operates within amino-acid biosynthesis; L-isoleucine biosynthesis; L-isoleucine from 2-oxobutanoate: step 3/4. It functions in the pathway amino-acid biosynthesis; L-valine biosynthesis; L-valine from pyruvate: step 3/4. Its function is as follows. Functions in the biosynthesis of branched-chain amino acids. Catalyzes the dehydration of (2R,3R)-2,3-dihydroxy-3-methylpentanoate (2,3-dihydroxy-3-methylvalerate) into 2-oxo-3-methylpentanoate (2-oxo-3-methylvalerate) and of (2R)-2,3-dihydroxy-3-methylbutanoate (2,3-dihydroxyisovalerate) into 2-oxo-3-methylbutanoate (2-oxoisovalerate), the penultimate precursor to L-isoleucine and L-valine, respectively. The polypeptide is Dihydroxy-acid dehydratase (Streptococcus suis (strain 98HAH33)).